A 447-amino-acid chain; its full sequence is Transcription factor azf1 (447 aa).

2 disordered regions span residues His-125 to Glu-155 and Gln-174 to Tyr-199. The segment covering Gly-127–Ser-139 has biased composition (low complexity). Positions Asn-140–Glu-155 are enriched in polar residues. 4 C2H2-type zinc fingers span residues Tyr-225–His-249, Phe-255–His-279, Phe-285–His-307, and Phe-313–His-338. The segment at Asn-377–His-447 is disordered. A compositionally biased stretch (basic and acidic residues) spans Pro-397–Arg-416. Positions Gly-421–Ser-431 are enriched in polar residues.

It localises to the nucleus. Functionally, transcription factor that acts as a positive regulator of ochratoxin A (OTA) biosynthesis via controlling the expression of antioxidant genes and oxidative phosphorylation genes. In Aspergillus niger (strain ATCC MYA-4892 / CBS 513.88 / FGSC A1513), this protein is Transcription factor azf1.